The following is a 277-amino-acid chain: Putative phosphoenolpyruvate synthase regulatory protein (277 aa).

ADP is bound at residue 157–164; sequence GVSRCGKT.

It belongs to the pyruvate, phosphate/water dikinase regulatory protein family. PSRP subfamily.

It catalyses the reaction [pyruvate, water dikinase] + ADP = [pyruvate, water dikinase]-phosphate + AMP + H(+). The enzyme catalyses [pyruvate, water dikinase]-phosphate + phosphate + H(+) = [pyruvate, water dikinase] + diphosphate. Its function is as follows. Bifunctional serine/threonine kinase and phosphorylase involved in the regulation of the phosphoenolpyruvate synthase (PEPS) by catalyzing its phosphorylation/dephosphorylation. The sequence is that of Putative phosphoenolpyruvate synthase regulatory protein from Enterobacter sp. (strain 638).